Reading from the N-terminus, the 858-residue chain is MITSENTDNRATNLYKPSDIEGKWQKIWEDDNLYNTDEQASNKEKFYALSMFPYPSGNLHMGHVRNYVITDLIARFQRFQGKVVLHPMGWDAFGLPAENAAIERGINPDKWTKQNIAHMKSQLKLLGLSVDWDREFATCDENYYVWTQFLFLELHKAGLVYQKESEVNWDPIDNTVLANEQVDSEGKSWRSGAIVEKKLLTQWFLKITDYAEELLQDLEKLNEWPERVKIMQENWIGKSIGTNINFKIKEFKKEKIQVFTTRPDTLFGVTYLAISVNHPLIKKISDNKILSKLENLKIYLQESKDKDQKKIGIPTNLIAINPINSKEIPILIASYVLDEYGTGAVMGVPAHDERDFEFAKINSIDIKQVIIKEKDKITSQLTNAFTDNGFLINSNNFDGLNNSDAKKHISEHGERNGWAENKIQFRLRDWLISRQRYWGCPIPIIKCTNCGSVPVNKKDIPVRLPNEIKISSNKINSLGSNQSWINTTCPKCGNLASRETDTMDTFMCSSWYFLRYPSSKSLTKPFEKEKINKWLPVDQYVGGVEHAILHLLYARFLTKALRDNNLFDIDEPFKRLLTQGMVQSAAYKNSITGKYISPTDIKDITNPKDPKDNSKLEVLFEKMSKSKYNGIDPESVIKKYGADTARMFILFKAPPEKDLEWGDSDVEGQYRFLCRIWKLFLDYSNNDITHEADKLKKENESSLLKSINIAIKEISNDIKNNQFNTAISELMKFYNSISSNLNYVNKDLRRESLMKFCILLAPFAPHISDEIWHLIGNSKSVHLEKWPVFDEDALKENSFELVIQINGKVRDKINVEINISDDEIKEKTLIRPNVKKWIDNKTIRKIIIVKGRIINIVV.

The 'HIGH' region motif lies at 53–63 (PYPSGNLHMGH). The short motif at 622 to 626 (KMSKS) is the 'KMSKS' region element. Lys625 serves as a coordination point for ATP.

The protein belongs to the class-I aminoacyl-tRNA synthetase family.

The protein localises to the cytoplasm. It catalyses the reaction tRNA(Leu) + L-leucine + ATP = L-leucyl-tRNA(Leu) + AMP + diphosphate. The polypeptide is Leucine--tRNA ligase (Prochlorococcus marinus subsp. pastoris (strain CCMP1986 / NIES-2087 / MED4)).